We begin with the raw amino-acid sequence, 453 residues long: Cysteine desulfurase, mitochondrial (453 aa).

A mitochondrion-targeting transit peptide spans 1–34; sequence MASKVISATIRRTLTKPHGTFSRCRYLSTAAAAT. Pyridoxal 5'-phosphate contacts are provided by residues 123 to 124, asparagine 203, glutamine 231, and 251 to 253; these read AT and SAH. Residue lysine 254 is modified to N6-(pyridoxal phosphate)lysine. Threonine 291 contacts pyridoxal 5'-phosphate. Cysteine 377 (cysteine persulfide intermediate) is an active-site residue. Cysteine 377 is a binding site for [2Fe-2S] cluster.

Belongs to the class-V pyridoxal-phosphate-dependent aminotransferase family. NifS/IscS subfamily. In terms of assembly, interacts with FH. Interacts with SUFE1. Requires pyridoxal 5'-phosphate as cofactor.

Its subcellular location is the mitochondrion. The catalysed reaction is (sulfur carrier)-H + L-cysteine = (sulfur carrier)-SH + L-alanine. With respect to regulation, threefold increase in the catalytic activity in the presence of FH (frataxin). 30-fold increase in the catalytic activity in the presence of SUFE1. Catalyzes the removal of elemental sulfur from cysteine to produce alanine. Supplies the inorganic sulfur for iron-sulfur (Fe-S) clusters. In Arabidopsis thaliana (Mouse-ear cress), this protein is Cysteine desulfurase, mitochondrial.